Here is a 1650-residue protein sequence, read N- to C-terminus: Phosphatidylinositol 3,4,5-trisphosphate-dependent Rac exchanger 1 protein (1650 aa).

Gly residues predominate over residues 1–19 (MEAPGSGGGDGGGDPGGDG). Positions 1 to 33 (MEAPGSGGGDGGGDPGGDGAHPDARGPVSGPCA) are disordered. The 192-residue stretch at 44–235 (LRLCVLNEIL…KTVCSNINET (192 aa)) folds into the DH domain. Residues 266–387 (ELLLQGNLLK…WLDALIRERE (122 aa)) form the PH domain. S314 is subject to Phosphoserine. 2 DEP domains span residues 416-491 (MSKK…RFRY) and 518-592 (SLYA…RFHA). Residues 620–698 (RLLIPPQEDD…SRRPLRLLVA (79 aa)) enclose the PDZ domain. Residues 793 to 813 (ARASQGAPDEDPQEDDQPDSA) form a disordered region. Positions 800–810 (PDEDPQEDDQP) are enriched in acidic residues. S991 carries the phosphoserine modification. Disordered regions lie at residues 1022-1047 (SPAV…GAPS) and 1099-1129 (PTSA…EVDR). The segment covering 1030-1047 (QGQGLNDSSYGSASGAPS) has biased composition (polar residues). The segment covering 1109-1122 (PSLVEETSSSPPVS) has biased composition (low complexity). S1186 and S1191 each carry phosphoserine.

In terms of assembly, interacts preferentially with RAC2. Interacts with RAC1. Interacts with AUTS2.

It localises to the cytoplasm. It is found in the cytosol. Its subcellular location is the cell membrane. Functionally, functions as a RAC guanine nucleotide exchange factor (GEF), which activates the Rac proteins by exchanging bound GDP for free GTP. Its activity is synergistically activated by phosphatidylinositol 3,4,5-trisphosphate and the beta gamma subunits of heterotrimeric G protein. May function downstream of heterotrimeric G proteins in neutrophils. The polypeptide is Phosphatidylinositol 3,4,5-trisphosphate-dependent Rac exchanger 1 protein (Prex1) (Mus musculus (Mouse)).